Reading from the N-terminus, the 487-residue chain is Structure-specific endonuclease subunit SLX1 (487 aa).

In terms of domain architecture, GIY-YIG spans 27–109 (PFYACYLLRS…QKPELSRHLR (83 aa)). Residues 44–69 (RTYVGSTPDPPRRIRQHNGELKQGAW) form a disordered region. An SLX1-type zinc finger spans residues 262–328 (CHLCQERIAF…LPYQGLCPNC (67 aa)). The span at 359 to 396 (KAEKAEKAEKAEKAEKAEKAEKAGRKVRQREMKTKKGD) shows a compositional bias: basic and acidic residues. 2 disordered regions span residues 359–407 (KAEK…QPES) and 433–475 (PARS…SEPE). Polar residues predominate over residues 397–407 (QSNGTVAQPES). The segment covering 438 to 455 (KSKDVGGEGIRHSTHTDD) has biased composition (basic and acidic residues). Residues 465–475 (ETEDESESEPE) show a composition bias toward acidic residues.

Belongs to the SLX1 family. As to quaternary structure, forms a heterodimer with SLX4. It depends on a divalent metal cation as a cofactor.

Its subcellular location is the nucleus. Catalytic subunit of the SLX1-SLX4 structure-specific endonuclease that resolves DNA secondary structures generated during DNA repair and recombination. Has endonuclease activity towards branched DNA substrates, introducing single-strand cuts in duplex DNA close to junctions with ss-DNA. This Cryptococcus neoformans var. neoformans serotype D (strain B-3501A) (Filobasidiella neoformans) protein is Structure-specific endonuclease subunit SLX1.